Consider the following 166-residue polypeptide: Mitochondrial fission process protein 1 (166 aa).

Helical transmembrane passes span 33–53, 78–98, and 125–145; these read SLVKPVVVKFSYVVAFGYVAA, AIAAVDTVLWQTFASVLIPGF, and TVTCLGLATIPFIVHPIDSFV.

Belongs to the MTFP1 family.

The protein resides in the mitochondrion inner membrane. In terms of biological role, involved in the mitochondrial division probably by regulating membrane fission. Loss-of-function leads to apoptosis. The protein is Mitochondrial fission process protein 1 (mtp-18) of Caenorhabditis elegans.